A 479-amino-acid chain; its full sequence is Glutamate--tRNA ligase (479 aa).

The 'HIGH' region signature appears at 21–31 (PSPTGYLHVGG). Positions 248–252 (KLSKR) match the 'KMSKS' region motif. Lys251 lines the ATP pocket.

Belongs to the class-I aminoacyl-tRNA synthetase family. Glutamate--tRNA ligase type 1 subfamily. In terms of assembly, monomer.

The protein localises to the cytoplasm. The catalysed reaction is tRNA(Glu) + L-glutamate + ATP = L-glutamyl-tRNA(Glu) + AMP + diphosphate. In terms of biological role, catalyzes the attachment of glutamate to tRNA(Glu) in a two-step reaction: glutamate is first activated by ATP to form Glu-AMP and then transferred to the acceptor end of tRNA(Glu). The polypeptide is Glutamate--tRNA ligase (Actinobacillus pleuropneumoniae serotype 7 (strain AP76)).